The primary structure comprises 360 residues: Photosystem II protein D1 (360 aa).

3 helical membrane-spanning segments follow: residues 29-46 (YVGW…TATT), 118-133 (QFLI…QWEL), and 142-156 (WICV…ARTA). Residue Tyr126 coordinates pheophytin a. [CaMn4O5] cluster-binding residues include Asp170 and Glu189. The chain crosses the membrane as a helical span at residues 197-218 (FHMLGVAGVFGGSLFSAMHGSL). Residue His198 participates in chlorophyll a binding. A quinone is bound by residues His215 and 264–265 (SF). His215 serves as a coordination point for Fe cation. His272 lines the Fe cation pocket. A helical transmembrane segment spans residues 274-288 (FLGAWPVIGIWFTAM). Residues His332, Glu333, Asp342, and Ala344 each coordinate [CaMn4O5] cluster. The propeptide occupies 345–360 (SGEQAPVALTAPAING).

This sequence belongs to the reaction center PufL/M/PsbA/D family. In terms of assembly, PSII is composed of 1 copy each of membrane proteins PsbA, PsbB, PsbC, PsbD, PsbE, PsbF, PsbH, PsbI, PsbJ, PsbK, PsbL, PsbM, PsbT, PsbX, PsbY, PsbZ, Psb30/Ycf12, peripheral proteins PsbO, CyanoQ (PsbQ), PsbU, PsbV and a large number of cofactors. It forms dimeric complexes. The D1/D2 heterodimer binds P680, chlorophylls that are the primary electron donor of PSII, and subsequent electron acceptors. It shares a non-heme iron and each subunit binds pheophytin, quinone, additional chlorophylls, carotenoids and lipids. D1 provides most of the ligands for the Mn4-Ca-O5 cluster of the oxygen-evolving complex (OEC). There is also a Cl(-1) ion associated with D1 and D2, which is required for oxygen evolution. The PSII complex binds additional chlorophylls, carotenoids and specific lipids. is required as a cofactor. In terms of processing, tyr-161 forms a radical intermediate that is referred to as redox-active TyrZ, YZ or Y-Z. Post-translationally, C-terminally processed by CtpA; processing is essential to allow assembly of the oxygen-evolving complex and thus photosynthetic growth.

The protein localises to the cellular thylakoid membrane. It carries out the reaction 2 a plastoquinone + 4 hnu + 2 H2O = 2 a plastoquinol + O2. Photosystem II (PSII) is a light-driven water:plastoquinone oxidoreductase that uses light energy to abstract electrons from H(2)O, generating O(2) and a proton gradient subsequently used for ATP formation. It consists of a core antenna complex that captures photons, and an electron transfer chain that converts photonic excitation into a charge separation. The D1/D2 (PsbA/PsbD) reaction center heterodimer binds P680, the primary electron donor of PSII as well as several subsequent electron acceptors. The chain is Photosystem II protein D1 from Synechocystis sp. (strain PCC 6714) (Aphanocapsa sp. (strain PCC 6714)).